We begin with the raw amino-acid sequence, 313 residues long: MNWVNDSIIQEFILLGFSDRPWLEFPLLVVFLISYTVTIFGNLTIILVSRLDTKLHTPMYFFLTNLSLLDLCYTTCTVPQMLVNLCSIRKVISYRGCVAQLFIFLALGATEYLLLAVMSFDRFVAICRPLHYSVIMHQRLCLQLAAASWVTGFSNSVWLSTLTLQLPLCDPYVIDHFLCEVPALLKLSCVETTANEAELFLVSELFHLIPLTLILISYAFIVRAVLRIQSAEGRQKAFGTCGSHLIVVSLFYSTAVSVYLQPPSPSSKDQGKMVSLFYGIIAPMLNPLIYTLRNKEVKEGFKRLVARVFLIKK.

Topologically, residues 1–25 (MNWVNDSIIQEFILLGFSDRPWLEF) are extracellular. The N-linked (GlcNAc...) asparagine glycan is linked to Asn-5. The helical transmembrane segment at 26–49 (PLLVVFLISYTVTIFGNLTIILVS) threads the bilayer. Over 50–57 (RLDTKLHT) the chain is Cytoplasmic. Residues 58–79 (PMYFFLTNLSLLDLCYTTCTVP) traverse the membrane as a helical segment. At 80–100 (QMLVNLCSIRKVISYRGCVAQ) the chain is on the extracellular side. A disulfide bridge links Cys-97 with Cys-189. The helical transmembrane segment at 101 to 120 (LFIFLALGATEYLLLAVMSF) threads the bilayer. Topologically, residues 121 to 139 (DRFVAICRPLHYSVIMHQR) are cytoplasmic. The helical transmembrane segment at 140-158 (LCLQLAAASWVTGFSNSVW) threads the bilayer. Over 159-195 (LSTLTLQLPLCDPYVIDHFLCEVPALLKLSCVETTAN) the chain is Extracellular. Residues 196–219 (EAELFLVSELFHLIPLTLILISYA) form a helical membrane-spanning segment. The Cytoplasmic segment spans residues 220–236 (FIVRAVLRIQSAEGRQK). Residues 237-259 (AFGTCGSHLIVVSLFYSTAVSVY) traverse the membrane as a helical segment. The Extracellular portion of the chain corresponds to 260–272 (LQPPSPSSKDQGK). A helical membrane pass occupies residues 273-292 (MVSLFYGIIAPMLNPLIYTL). Residues 293-313 (RNKEVKEGFKRLVARVFLIKK) lie on the Cytoplasmic side of the membrane.

This sequence belongs to the G-protein coupled receptor 1 family.

Its subcellular location is the cell membrane. Its function is as follows. Odorant receptor. This is Olfactory receptor 2B6 from Homo sapiens (Human).